The sequence spans 345 residues: Phosphoribosylformylglycinamidine cyclo-ligase (345 aa).

This sequence belongs to the AIR synthase family.

It localises to the cytoplasm. The enzyme catalyses 2-formamido-N(1)-(5-O-phospho-beta-D-ribosyl)acetamidine + ATP = 5-amino-1-(5-phospho-beta-D-ribosyl)imidazole + ADP + phosphate + H(+). It functions in the pathway purine metabolism; IMP biosynthesis via de novo pathway; 5-amino-1-(5-phospho-D-ribosyl)imidazole from N(2)-formyl-N(1)-(5-phospho-D-ribosyl)glycinamide: step 2/2. The protein is Phosphoribosylformylglycinamidine cyclo-ligase of Sodalis glossinidius (strain morsitans).